A 225-amino-acid chain; its full sequence is Membrane protein (225 aa).

Residues 1 to 20 (MDNTTNCTLGTEQAVQLFKE) lie on the Virion surface side of the membrane. A helical membrane pass occupies residues 21–41 (YNLFVTAFLLFLTILLQYGYA). The Intravirion portion of the chain corresponds to 42–51 (TRNKVIYILK). The chain crosses the membrane as a helical span at residues 52-72 (MIVLWCFWPLNIAVGAISCIY). Residues 73 to 77 (PPNTG) lie on the Virion surface side of the membrane. The helical transmembrane segment at 78 to 98 (GLVAAIILTVFACLSFIGYWI) threads the bilayer. Topologically, residues 99–225 (QSFRLFKRCR…VATGGSSLYT (127 aa)) are intravirion.

This sequence belongs to the gammacoronaviruses M protein family. As to quaternary structure, homomultimer. Interacts with envelope E protein in the budding compartment of the host cell, which is located between endoplasmic reticulum and the Golgi complex. Forms a complex with HE and S proteins. Interacts with nucleocapsid N protein. This interaction probably participates in RNA packaging into the virus.

The protein localises to the virion membrane. It localises to the host Golgi apparatus membrane. In terms of biological role, component of the viral envelope that plays a central role in virus morphogenesis and assembly via its interactions with other viral proteins. In Avian infectious bronchitis virus (strain 6/82) (IBV), this protein is Membrane protein.